The following is a 192-amino-acid chain: Ion-translocating oxidoreductase complex subunit A (192 aa).

Helical transmembrane passes span 5–25 (LLLL…FLGL), 39–59 (IGMS…SYLV), 65–85 (LPFD…AVVV), 102–122 (ALGI…VALL), 134–154 (AIFG…FSAM), and 171–191 (AIAM…TGLV).

The protein belongs to the NqrDE/RnfAE family. In terms of assembly, the complex is composed of six subunits: RnfA, RnfB, RnfC, RnfD, RnfE and RnfG.

The protein resides in the cell inner membrane. Functionally, part of a membrane-bound complex that couples electron transfer with translocation of ions across the membrane. The polypeptide is Ion-translocating oxidoreductase complex subunit A (Shewanella piezotolerans (strain WP3 / JCM 13877)).